The chain runs to 418 residues: Trans-acting enoyl reductase (418 aa).

This sequence belongs to the saccharopine dehydrogenase family. Enoyl reductase subfamily.

Involved in the reduction of the double bond between C-4 and C-5 during phthiocerol dimycocerosates (DIM A) and glycosylated phenolphthiocerol dimycocerosates (PGL) biosynthesis. This chain is Trans-acting enoyl reductase, found in Mycobacterium leprae (strain TN).